The following is a 426-amino-acid chain: D-tagatose-1,6-bisphosphate aldolase subunit KbaZ (426 aa).

It belongs to the GatZ/KbaZ family. KbaZ subfamily. As to quaternary structure, forms a complex with KbaY.

Its pathway is carbohydrate metabolism; D-tagatose 6-phosphate degradation; D-glyceraldehyde 3-phosphate and glycerone phosphate from D-tagatose 6-phosphate: step 2/2. Component of the tagatose-1,6-bisphosphate aldolase KbaYZ that is required for full activity and stability of the Y subunit. Could have a chaperone-like function for the proper and stable folding of KbaY. When expressed alone, KbaZ does not show any aldolase activity. The chain is D-tagatose-1,6-bisphosphate aldolase subunit KbaZ from Escherichia coli O157:H7.